The primary structure comprises 1480 residues: Cystic fibrosis transmembrane conductance regulator (1480 aa).

Over 1-77 (MQRSPLEKAS…KLINALRRCF (77 aa)) the chain is Cytoplasmic. The helical transmembrane segment at 78-98 (FWRFMFYGIFLYLGEVTKAVQ) threads the bilayer. The ABC transmembrane type-1 1 domain occupies 81 to 365 (FMFYGIFLYL…WAVQTWYDSL (285 aa)). The Extracellular segment spans residues 99–122 (PLLLGRIIASYDPDNKEERSIAIY). Residues 123 to 146 (LGIGLCLLFIVRTLLLHPAIFGLH) traverse the membrane as a helical segment. Residues 147–195 (HIGMQMRIAMFSLIYKKTLKLSSRVLDKISIGQLVSLLSNNLNKFDEGL) are Cytoplasmic-facing. Residues 196 to 216 (ALAHFVWIAPLQVALLMGLIW) traverse the membrane as a helical segment. Topologically, residues 217–222 (ELLQAS) are extracellular. A helical transmembrane segment spans residues 223-243 (AFCGLGFLIVLALFQAGLGRM). The Cytoplasmic portion of the chain corresponds to 244 to 298 (MMKYRDQRAGKISERLVITSEMIENIQSVKAYCWEEAMEKMIENLRQTELKLTRK). The helical transmembrane segment at 299–319 (AAYVRYFNSSAFFFSGFFVVF) threads the bilayer. Residues 320 to 339 (LSVLPYALIKGIVLRKIFTT) lie on the Extracellular side of the membrane. The helical transmembrane segment at 340–358 (ISFCIVLRMAVTRQFPWAV) threads the bilayer. The Cytoplasmic portion of the chain corresponds to 359 to 858 (QTWYDSLGAI…YLRYITVHKS (500 aa)). ATP-binding positions include Trp-401, Ser-434, 458–465 (GSTGAGKT), and Gln-493. An ABC transporter 1 domain is found at 423-646 (NGDDSLFFSN…RPDFSSKLMG (224 aa)). Cys-524 is lipidated: S-palmitoyl cysteine. Phosphoserine is present on residues Ser-549 and Ser-660. The disordered R region stretch occupies residues 654 to 831 (SAERRNSILT…EEINEEDLKE (178 aa)). Phosphoserine; by PKA is present on Ser-670. Position 686 is a phosphoserine (Ser-686). A Glycyl lysine isopeptide (Lys-Gly) (interchain with G-Cter in ubiquitin) cross-link involves residue Lys-688. Phosphoserine is present on residues Ser-700 and Ser-712. Position 717 is a phosphothreonine (Thr-717). 6 positions are modified to phosphoserine: Ser-737, Ser-753, Ser-768, Ser-790, Ser-795, and Ser-813. A helical transmembrane segment spans residues 859-879 (LIFVLIWCLVIFLAEVAASLV). The region spanning 859 to 1155 (LIFVLIWCLV…AVNSSIDVDS (297 aa)) is the ABC transmembrane type-1 2 domain. Over 880 to 918 (VLWLLGNTPLQDKGNSTHSRNNSYAVIITSTSSYYVFYI) the chain is Extracellular. 2 N-linked (GlcNAc...) asparagine glycosylation sites follow: Asn-894 and Asn-900. Residues 919–939 (YVGVADTLLAMGFFRGLPLVH) form a discontinuously helical membrane-spanning segment. The Cytoplasmic portion of the chain corresponds to 940–990 (TLITVSKILHHKMLHSVLQAPMSTLNTLKAGGILNRFSKDIAILDDLLPLT). The helical transmembrane segment at 991-1011 (IFDFIQLLLIVIGAIAVVAVL) threads the bilayer. Residues 1012–1013 (QP) lie on the Extracellular side of the membrane. The chain crosses the membrane as a helical span at residues 1014-1034 (YIFVATVPVIVAFIMLRAYFL). Topologically, residues 1035-1095 (QTSQQLKQLE…TANWFLYLST (61 aa)) are cytoplasmic. The chain crosses the membrane as a helical span at residues 1096-1116 (LRWFQMRIEMIFVMFFIAVTF). The Extracellular segment spans residues 1117-1130 (ISILTTGEGEGRIG). The chain crosses the membrane as a helical span at residues 1131–1151 (IILTLAMNIMSTLQWAVNSSI). Topologically, residues 1152–1480 (DVDSLMRSVS…TEEEVQDTRL (329 aa)) are cytoplasmic. The ABC transporter 2 domain occupies 1210–1443 (MTVKDLSAKY…RSLFRQAISP (234 aa)). ATP contacts are provided by residues Tyr-1219 and 1244 to 1251 (GRTGSGKS). The segment at 1386–1480 (RTLKQAFADC…TEEEVQDTRL (95 aa)) is interaction with GORASP2. Cys-1395 carries S-palmitoyl cysteine lipidation. 2 positions are modified to phosphoserine: Ser-1444 and Ser-1456. Residues 1451 to 1480 (PHRNSSKGKSQPQIAALKEETEEEVQDTRL) form a disordered region. The span at 1470–1480 (ETEEEVQDTRL) shows a compositional bias: acidic residues. The PDZ-binding signature appears at 1478-1480 (TRL).

The protein belongs to the ABC transporter superfamily. ABCC family. CFTR transporter (TC 3.A.1.202) subfamily. Monomer; does not require oligomerization for channel activity. May form oligomers in the membrane. Interacts with SLC26A3, SLC26A6 and NHERF1. Interacts with SHANK2. Interacts with MYO6. Interacts (via C-terminus) with GOPC (via PDZ domain); this promotes CFTR internalization and thereby decreases channel activity. Interacts with SLC4A7 through NHERF1. Found in a complex with MYO5B and RAB11A. Interacts with ANO1. Interacts with SLC26A8. Interacts with AHCYL1; the interaction increases CFTR activity. Interacts with CSE1L. The core-glycosylated form interacts with GORASP2 (via PDZ GRASP-type 1 domain) in respone to ER stress. Interacts with MARCHF2; the interaction leads to CFTR ubiqtuitination and degradation. Interacts with ADGRG2. N-glycosylated. Post-translationally, phosphorylated; cAMP treatment promotes phosphorylation and activates the channel. Dephosphorylation decreases the ATPase activity (in vitro). Phosphorylation at PKA sites activates the channel. Phosphorylation at PKC sites enhances the response to phosphorylation by PKA. Phosphorylated by AMPK; this inhibits channel activity. In terms of processing, ubiquitinated, leading to its degradation in the lysosome. Deubiquitination by USP10 in early endosomes enhances its endocytic recycling to the cell membrane. Ubiquitinated by RNF185 during ER stress. Ubiquitinated by MARCHF2.

The protein localises to the apical cell membrane. It localises to the early endosome membrane. It is found in the cell membrane. The protein resides in the recycling endosome membrane. Its subcellular location is the endoplasmic reticulum membrane. The protein localises to the nucleus. It carries out the reaction ATP + H2O + closed Cl(-) channel = ADP + phosphate + open Cl(-) channel.. The catalysed reaction is chloride(in) = chloride(out). It catalyses the reaction hydrogencarbonate(in) = hydrogencarbonate(out). The enzyme catalyses ATP + H2O = ADP + phosphate + H(+). Its function is as follows. Epithelial ion channel that plays an important role in the regulation of epithelial ion and water transport and fluid homeostasis. Mediates the transport of chloride ions across the cell membrane. Possesses an intrinsic ATPase activity and utilizes ATP to gate its channel; the passive flow of anions through the channel is gated by cycles of ATP binding and hydrolysis by the ATP-binding domains. The ion channel is also permeable to HCO(3)(-); selectivity depends on the extracellular chloride concentration. Exerts its function also by modulating the activity of other ion channels and transporters. Contributes to the regulation of the pH and the ion content of the epithelial fluid layer. Modulates the activity of the epithelial sodium channel (ENaC) complex, in part by regulating the cell surface expression of the ENaC complex. May regulate bicarbonate secretion and salvage in epithelial cells by regulating the transporter SLC4A7. Can inhibit the chloride channel activity of ANO1. Plays a role in the chloride and bicarbonate homeostasis during sperm epididymal maturation and capacitation. In Nomascus leucogenys (Northern white-cheeked gibbon), this protein is Cystic fibrosis transmembrane conductance regulator.